We begin with the raw amino-acid sequence, 193 residues long: Non-specific lipid transfer protein GPI-anchored 1 (193 aa).

The first 22 residues, 1 to 22 (MKGLHLHLVLVTMTIVASIAAA), serve as a signal peptide directing secretion. 4 disulfide bridges follow: C35-C76, C45-C60, C61-C106, and C74-C116. N-linked (GlcNAc...) asparagine glycans are attached at residues N110 and N135. Residues 138-161 (TTPVAPAGKSPATPATSTDKGGSA) are disordered. A lipid anchor (GPI-anchor amidated aspartate) is attached at D165. A propeptide spans 166–193 (GHAVVALAVALMAVSFVLTLPRHVTLGM) (removed in mature form).

Belongs to the plant LTP family. O-glycosylated on hydroxyprolines; noncontiguous hydroxylproline residues are glycosylated with arabinogalactan. Up-regulated in the epidermis of stems and leaves. Expressed in the epidermis, stem cortex, vascular bundles and mesophyll cells in root tips, cotyledons, seedlings, leaves, caulines, flowers, siliques, pollen, and early-developing seeds.

The protein resides in the cell membrane. It localises to the secreted. The protein localises to the cell wall. It is found in the endoplasmic reticulum. Its subcellular location is the golgi apparatus. Lipid transfer protein that, together with LTPG2, binds to lipids and functions as a component of the cuticular lipid export machinery that performs extensive export of intracellular lipids (e.g. C29 alkane) from epidermal cells to the surface to build the cuticular wax layer and silique walls. Involved in the establishment of resistance to the necrotrophic fungal pathogen Alternaria brassicicola. Contributes to pre-invasive defense against some non-host powdery mildew pathogens by preventing the penetration of the epidermal cell wall by the fungal agents (e.g. Blumeria graminis f. sp. hordei (Bgh)). Maybe involved in seed and ovule maturation and development, probably by regulating the fatty acids homeostasis during suberin and sporopollenin biosynthesis or deposition. This is Non-specific lipid transfer protein GPI-anchored 1 from Arabidopsis thaliana (Mouse-ear cress).